The chain runs to 210 residues: Probable GTP-binding protein EngB (210 aa).

In terms of domain architecture, EngB-type G spans 25–199; that stretch reads TGIEVAFAGR…RQKLDTWFSE (175 aa). Residues 33–40, 60–64, 78–81, 145–148, and 178–180 each bind GTP; these read GRSNAGKS, GRTQL, DLPG, TKTD, and FSS. Mg(2+) contacts are provided by serine 40 and threonine 62.

This sequence belongs to the TRAFAC class TrmE-Era-EngA-EngB-Septin-like GTPase superfamily. EngB GTPase family. The cofactor is Mg(2+).

In terms of biological role, necessary for normal cell division and for the maintenance of normal septation. The chain is Probable GTP-binding protein EngB from Escherichia coli O6:K15:H31 (strain 536 / UPEC).